Consider the following 234-residue polypeptide: Probable ascorbate-specific transmembrane electron transporter 1 (234 aa).

Residues 1–9 (MGLGVRAAP) lie on the Cytoplasmic side of the membrane. Residues 10–30 (FTYVAHALAVAAATMVLVWCI) form a helical membrane-spanning segment. One can recognise a Cytochrome b561 domain in the interval 13–217 (VAHALAVAAA…FGASVVVAAV (205 aa)). The Extracellular segment spans residues 31-48 (HFRGGLAFEATNKNLIFN). A helical transmembrane segment spans residues 49–69 (VHPVLMLIGYIILGSEAIMVY). A heme b-binding site is contributed by histidine 50. L-ascorbate is bound at residue 65-73 (AIMVYKVLP). Residues 70–82 (KVLPTWKHDTTKL) are Cytoplasmic-facing. The chain crosses the membrane as a helical span at residues 83-103 (IHLILHAIALVFGAVGIYCAF). Positions 84 and 118 each coordinate heme b. Residues 104–121 (KFHNESGIANLYSLHSWL) are Extracellular-facing. A monodehydro-L-ascorbate radical-binding site is contributed by 114–123 (LYSLHSWLGI). Residues 122–142 (GIGTICLYGIQWIFGFVAFFF) form a helical membrane-spanning segment. Topologically, residues 143–151 (PRASPSVRK) are cytoplasmic. A helical transmembrane segment spans residues 152-172 (GVLPWHILFGLFVYILALATA). Histidine 157 is a heme b binding site. The Extracellular segment spans residues 173-194 (ELGFLEKLTFLQSSGLDKYGAE). Residues 195-215 (AFLVNFTALIVVLFGASVVVA) form a helical membrane-spanning segment. Topologically, residues 216-234 (AVSPARVEEPHEYAPIPES) are cytoplasmic.

It depends on heme b as a cofactor.

It is found in the membrane. Its function is as follows. Two-heme-containing cytochrome. Catalyzes ascorbate-dependent trans-membrane electron transfer by utilizing a concerted H(+)/e(-) transfer mechanism. In Oryza sativa subsp. japonica (Rice), this protein is Probable ascorbate-specific transmembrane electron transporter 1.